Here is a 427-residue protein sequence, read N- to C-terminus: 3-phosphoshikimate 1-carboxyvinyltransferase (427 aa).

K20, S21, and R25 together coordinate 3-phosphoshikimate. K20 contributes to the phosphoenolpyruvate binding site. Phosphoenolpyruvate-binding residues include G92 and R120. 4 residues coordinate 3-phosphoshikimate: S166, Q168, D312, and K339. Q168 is a phosphoenolpyruvate binding site. The active-site Proton acceptor is the D312. The phosphoenolpyruvate site is built by R343 and R385.

Belongs to the EPSP synthase family. In terms of assembly, monomer.

It localises to the cytoplasm. The catalysed reaction is 3-phosphoshikimate + phosphoenolpyruvate = 5-O-(1-carboxyvinyl)-3-phosphoshikimate + phosphate. The protein operates within metabolic intermediate biosynthesis; chorismate biosynthesis; chorismate from D-erythrose 4-phosphate and phosphoenolpyruvate: step 6/7. Functionally, catalyzes the transfer of the enolpyruvyl moiety of phosphoenolpyruvate (PEP) to the 5-hydroxyl of shikimate-3-phosphate (S3P) to produce enolpyruvyl shikimate-3-phosphate and inorganic phosphate. The protein is 3-phosphoshikimate 1-carboxyvinyltransferase of Streptococcus pyogenes serotype M49 (strain NZ131).